The sequence spans 135 residues: Histone H3 type 3 (135 aa).

The tract at residues 1–40 (MARTKQTARKSTGGKAPRKQLATKAARKTPATGGVKKPHR) is disordered. The residue at position 5 (lysine 5) is an N6-methyllysine. Lysine 10 carries the post-translational modification N6-acetyllysine; alternate. Lysine 10 carries the N6-methyllysine; alternate modification. At serine 11 the chain carries Phosphoserine. At threonine 12 the chain carries Phosphothreonine. N6-acetyllysine is present on residues lysine 15, lysine 19, and lysine 24. An N6-acetyllysine; alternate modification is found at lysine 28. Lysine 28 bears the N6-methyllysine; alternate mark. 2 positions are modified to N6-methyllysine: lysine 36 and lysine 37.

The protein belongs to the histone H3 family. As to quaternary structure, the nucleosome is a histone octamer containing two molecules each of H2A, H2B, H3 and H4 assembled in one H3-H4 heterotetramer and two H2A-H2B heterodimers. The octamer wraps approximately 147 bp of DNA. Post-translationally, acetylation is generally linked to gene activation. Acetylated to form H3K9ac (11%), H3K14ac (17%), H3K18ac (11%), H3K23ac (16%) and H3K27ac (7%). H3K4, H3K35 and H3K36 are not acetylated. H3K4me prevents acetylation. 32% of the histone H3 are acetylated with, on average, 2.4 acetyl-Lys. They are all continuously deacatylated and re-acetylated with a half-life of approximately 2 minutes. In terms of processing, monomethylated to form H3K4me1 (81%), H3K9me1 (16%), H3K27me1 (25%), H3K35me1 (25%) and H3K36me1 (5%). No methylation at H3K14, H3K18 and H3K23. Methylated by a protein complex that includes Mut11. Set1 methylates specifically H3K4. H3K4me1 is associated with silenced euchromatin. Set3 forms H3K9me1, while H3K9me2 is undetected. H3K9me1 is specifically associated with silent, multi-copy transgenes. No phosphorylation detected.

The protein resides in the nucleus. Its subcellular location is the chromosome. Functionally, core component of nucleosome. Nucleosomes wrap and compact DNA into chromatin, limiting DNA accessibility to the cellular machineries which require DNA as a template. Histones thereby play a central role in transcription regulation, DNA repair, DNA replication and chromosomal stability. DNA accessibility is regulated via a complex set of post-translational modifications of histones, also called histone code, and nucleosome remodeling. The chain is Histone H3 type 3 (ch3-IV) from Chlamydomonas reinhardtii (Chlamydomonas smithii).